The following is a 423-amino-acid chain: UPF0229 protein PST_0721 (423 aa).

Positions 84 to 109 (AGERIPRPQGGGGGQGAGQASNSGEG) are disordered.

This sequence belongs to the UPF0229 family.

This Stutzerimonas stutzeri (strain A1501) (Pseudomonas stutzeri) protein is UPF0229 protein PST_0721.